Consider the following 145-residue polypeptide: Cell division protein SepF (145 aa).

The protein belongs to the SepF family. As to quaternary structure, homodimer. Interacts with FtsZ.

The protein localises to the cytoplasm. Functionally, cell division protein that is part of the divisome complex and is recruited early to the Z-ring. Probably stimulates Z-ring formation, perhaps through the cross-linking of FtsZ protofilaments. Its function overlaps with FtsA. The protein is Cell division protein SepF of Lactobacillus acidophilus (strain ATCC 700396 / NCK56 / N2 / NCFM).